The primary structure comprises 358 residues: Aminomethyltransferase (358 aa).

Belongs to the GcvT family. As to quaternary structure, the glycine cleavage system is composed of four proteins: P, T, L and H.

It carries out the reaction N(6)-[(R)-S(8)-aminomethyldihydrolipoyl]-L-lysyl-[protein] + (6S)-5,6,7,8-tetrahydrofolate = N(6)-[(R)-dihydrolipoyl]-L-lysyl-[protein] + (6R)-5,10-methylene-5,6,7,8-tetrahydrofolate + NH4(+). Its function is as follows. The glycine cleavage system catalyzes the degradation of glycine. This is Aminomethyltransferase from Francisella tularensis subsp. tularensis (strain WY96-3418).